The chain runs to 250 residues: 5'-nucleotidase SurE (250 aa).

Residues Asp-8, Asp-9, Ser-39, and Asn-95 each contribute to the a divalent metal cation site.

Belongs to the SurE nucleotidase family. The cofactor is a divalent metal cation.

Its subcellular location is the cytoplasm. It carries out the reaction a ribonucleoside 5'-phosphate + H2O = a ribonucleoside + phosphate. Its function is as follows. Nucleotidase that shows phosphatase activity on nucleoside 5'-monophosphates. This is 5'-nucleotidase SurE from Cupriavidus necator (strain ATCC 17699 / DSM 428 / KCTC 22496 / NCIMB 10442 / H16 / Stanier 337) (Ralstonia eutropha).